Consider the following 447-residue polypeptide: Ribosomal protein uS12 methylthiotransferase RimO (447 aa).

Residues 4–114 form the MTTase N-terminal domain; sequence PKVGFVSLGC…VMEAVHEYVP (111 aa). [4Fe-4S] cluster-binding residues include C13, C49, C78, C147, C151, and C154. The 238-residue stretch at 133-370 folds into the Radical SAM core domain; that stretch reads LTPKHYAYLK…MQVQQQISAA (238 aa). One can recognise a TRAM domain in the interval 373 to 443; the sequence is QKRIGQTMTV…EYDLFAKLIK (71 aa).

The protein belongs to the methylthiotransferase family. RimO subfamily. [4Fe-4S] cluster serves as cofactor.

It localises to the cytoplasm. The catalysed reaction is L-aspartate(89)-[ribosomal protein uS12]-hydrogen + (sulfur carrier)-SH + AH2 + 2 S-adenosyl-L-methionine = 3-methylsulfanyl-L-aspartate(89)-[ribosomal protein uS12]-hydrogen + (sulfur carrier)-H + 5'-deoxyadenosine + L-methionine + A + S-adenosyl-L-homocysteine + 2 H(+). Catalyzes the methylthiolation of an aspartic acid residue of ribosomal protein uS12. The sequence is that of Ribosomal protein uS12 methylthiotransferase RimO from Acinetobacter baumannii (strain AB0057).